The sequence spans 206 residues: MKLLIFICLAAVALARPKPPLRHQEHLQNEPDSREELFKERKFLRFPEVPLLSQFRQEIINELNRNHGMEGHEQRGSSSSSSEEVVGNSAEQKHVQKEEDVPSQSYLGHLQGLNKYKLRQLEAIHDQELHRTNEDKHTQQGEPMKGVNQEQAYFYFEPLHQFYQLDAYPYATWYYPPQYIAHPLFTNIPQPTAPEKGGKTEIMPQW.

Residues 1–15 (MKLLIFICLAAVALA) form the signal peptide. Serine 33, serine 77, serine 78, serine 79, serine 80, serine 81, serine 82, and serine 89 each carry phosphoserine. Residues 67–106 (HGMEGHEQRGSSSSSSEEVVGNSAEQKHVQKEEDVPSQSY) form a disordered region. Positions 91–100 (EQKHVQKEED) are enriched in basic and acidic residues.

This sequence belongs to the alpha-casein family. Mammary gland specific. Secreted in milk.

The protein resides in the secreted. In terms of biological role, important role in the capacity of milk to transport calcium phosphate. This Sus scrofa (Pig) protein is Alpha-S1-casein (CSN1S1).